Reading from the N-terminus, the 291-residue chain is Porphobilinogen deaminase (291 aa).

The residue at position 233 (cysteine 233) is an S-(dipyrrolylmethanemethyl)cysteine.

The protein belongs to the HMBS family. In terms of assembly, monomer. Requires dipyrromethane as cofactor.

It catalyses the reaction 4 porphobilinogen + H2O = hydroxymethylbilane + 4 NH4(+). The protein operates within porphyrin-containing compound metabolism; protoporphyrin-IX biosynthesis; coproporphyrinogen-III from 5-aminolevulinate: step 2/4. In terms of biological role, tetrapolymerization of the monopyrrole PBG into the hydroxymethylbilane pre-uroporphyrinogen in several discrete steps. This chain is Porphobilinogen deaminase (hemC), found in Ruminiclostridium josui (Clostridium josui).